The sequence spans 1124 residues: Phytochrome A1 (1124 aa).

Low complexity predominate over residues 1 to 14 (MSSSRPSQSSTTSA). The segment at 1–20 (MSSSRPSQSSTTSARSKHSA) is disordered. Residues 218–401 (SMERLCDTMV…VFAIHVNKEL (184 aa)) form the GAF domain. Position 323 (cysteine 323) interacts with phytochromobilin. A PAS 1 domain is found at 617 to 687 (VTAEMVRLIE…KMLELALQGK (71 aa)). Positions 690–746 (RNVEFEIKTHGPSGDSSPISLIVNACASRDVGDSVVGVCFIAQDITGQKNIMDKFTR) constitute a PAC domain. Residues 747–821 (IEGDYRAIIQ…KNQEAFVNFG (75 aa)) enclose the PAS 2 domain. The Histidine kinase domain maps to 901-1118 (YIRRQIRNPL…TFIISVELAV (218 aa)).

It belongs to the phytochrome family. Homodimer. Post-translationally, contains one covalently linked phytochromobilin chromophore.

Its function is as follows. Regulatory photoreceptor which exists in two forms that are reversibly interconvertible by light: the Pr form that absorbs maximally in the red region of the spectrum and the Pfr form that absorbs maximally in the far-red region. Photoconversion of Pr to Pfr induces an array of morphogenic responses, whereas reconversion of Pfr to Pr cancels the induction of those responses. Pfr controls the expression of a number of nuclear genes including those encoding the small subunit of ribulose-bisphosphate carboxylase, chlorophyll A/B binding protein, protochlorophyllide reductase, rRNA, etc. It also controls the expression of its own gene(s) in a negative feedback fashion. This Nicotiana tabacum (Common tobacco) protein is Phytochrome A1 (PHYA1).